A 189-amino-acid polypeptide reads, in one-letter code: Cancer/testis antigen family 45 member A3 (189 aa).

The interval 81–119 (KDRMMQKPGSNAPVGGNVTSSFSGDDLECRETASSPKSQ) is disordered.

It belongs to the CT45 family. Testis specific. Expressed in cancer cell lines.

The protein resides in the nucleus. The sequence is that of Cancer/testis antigen family 45 member A3 from Homo sapiens (Human).